The sequence spans 80 residues: MAITNEQVERINELARKKKAEGLSEAELEEQALLRRAYLDSVKANFRSQVETIKVIDEKTGEDVTPDKLKEIQRKNGMRD.

This sequence belongs to the UPF0291 family.

It is found in the cytoplasm. The polypeptide is UPF0291 protein YlaC (ylcA) (Lactococcus lactis subsp. lactis (strain IL1403) (Streptococcus lactis)).